Consider the following 218-residue polypeptide: Ras-related protein Rab-11B (218 aa).

Position 2 is an N-acetylglycine (glycine 2). Arginine 4 carries the citrulline modification. Residues serine 20, glycine 21, glycine 23, lysine 24, serine 25, asparagine 26, asparagine 37, leucine 38, serine 40, serine 42, and threonine 43 each coordinate GTP. Serine 25 is a binding site for Mg(2+). The Switch 1 motif lies at 36–47; it reads FNLESKSTIGVE. Threonine 43 and aspartate 66 together coordinate Mg(2+). A Switch 2 motif is present at residues 67 to 86; sequence TAGQERYRAITSAYYRGAVG. GTP is bound by residues glycine 69, asparagine 124, lysine 125, aspartate 127, alanine 155, and leucine 156. The tract at residues 184–218 is disordered; it reads RAAHDESPGNNVVDISVPPTTDGQRPNKLQCCQSL. 2 S-geranylgeranyl cysteine lipidation sites follow: cysteine 214 and cysteine 215. Cysteine 215 is subject to Cysteine methyl ester. Positions 216–218 are cleaved as a propeptide — removed in mature form; it reads QSL.

The protein belongs to the small GTPase superfamily. Rab family. As to quaternary structure, interacts with KCNMA1. Interacts with RAB11FIP1, RAB11FIP2, RAB11FIP3 and RAB11FIP4. May interact with TBC1D14. Interacts with ATP6V1E1. Interacts with PI4KB. Interacts (GDP-bound form) with ZFYVE27. Interacts (GDP-bound form) with KIF5A in a ZFYVE27-dependent manner. Interacts with RELCH. Interacts (in GTP-bound form) with TBC1D8B (via domain Rab-GAP TBC). Forms a complex containing RAB11B, ASAP1, Rabin8/RAB3IP, RAP11FIP3 and ARF4. Interacts with WDR44. Requires Mg(2+) as cofactor. Post-translationally, citrullinated by PADI4. In terms of tissue distribution, abundantly expressed in brain, heart and testis. Also detected in kidney and pancreatic islets.

The protein resides in the recycling endosome membrane. The protein localises to the cytoplasmic vesicle. It is found in the secretory vesicle. It localises to the synaptic vesicle membrane. Its subcellular location is the phagosome membrane. The enzyme catalyses GTP + H2O = GDP + phosphate + H(+). Regulated by guanine nucleotide exchange factors (GEFs) which promote the exchange of bound GDP for free GTP. Regulated by GTPase activating proteins (GAPs) which increase the GTP hydrolysis activity. Inhibited by GDP dissociation inhibitors (GDIs) which prevent Rab-GDP dissociation. In terms of biological role, the small GTPases Rab are key regulators of intracellular membrane trafficking, from the formation of transport vesicles to their fusion with membranes. Rabs cycle between an inactive GDP-bound form and an active GTP-bound form that is able to recruit to membranes different set of downstream effectors directly responsible for vesicle formation, movement, tethering and fusion. The small Rab GTPase RAB11B plays a role in endocytic recycling, regulating apical recycling of several transmembrane proteins including cystic fibrosis transmembrane conductance regulator/CFTR, epithelial sodium channel/ENaC, potassium voltage-gated channel, and voltage-dependent L-type calcium channel. May also regulate constitutive and regulated secretion, like insulin granule exocytosis. Required for melanosome transport and release from melanocytes. Also regulates V-ATPase intracellular transport in response to extracellular acidosis. Promotes Rabin8/RAB3IP preciliary vesicular trafficking to mother centriole by forming a ciliary targeting complex containing Rab11, ASAP1, Rabin8/RAB3IP, RAB11FIP3 and ARF4, thereby regulating ciliogenesis initiation. On the contrary, upon LPAR1 receptor signaling pathway activation, interaction with phosphorylated WDR44 prevents Rab11-RAB3IP-RAB11FIP3 complex formation and cilia growth. This is Ras-related protein Rab-11B from Mus musculus (Mouse).